We begin with the raw amino-acid sequence, 260 residues long: NifU-like protein C1709.19c (260 aa).

The tract at residues 161–231 (IKELIETSIR…IPEVENVVQV (71 aa)) is nifU.

The protein belongs to the NifU family.

This is NifU-like protein C1709.19c from Schizosaccharomyces pombe (strain 972 / ATCC 24843) (Fission yeast).